A 664-amino-acid polypeptide reads, in one-letter code: UvrABC system protein B (664 aa).

The region spanning 25 to 182 (KSFGEGKNKI…RKFLHIQYAR (158 aa)) is the Helicase ATP-binding domain. 38 to 45 (GVTGSGKT) serves as a coordination point for ATP. The short motif at 91–114 (YYDYYQPEAYVPSSDTFIEKDMSM) is the Beta-hairpin element. One can recognise a Helicase C-terminal domain in the interval 429-595 (QIEDLLNEIR…TIQKEIHDIL (167 aa)). A UVR domain is found at 625–660 (DKLREALKREMLRYANDMDFEKAAMFRDKMLALGPD).

The protein belongs to the UvrB family. Forms a heterotetramer with UvrA during the search for lesions. Interacts with UvrC in an incision complex.

The protein resides in the cytoplasm. Functionally, the UvrABC repair system catalyzes the recognition and processing of DNA lesions. A damage recognition complex composed of 2 UvrA and 2 UvrB subunits scans DNA for abnormalities. Upon binding of the UvrA(2)B(2) complex to a putative damaged site, the DNA wraps around one UvrB monomer. DNA wrap is dependent on ATP binding by UvrB and probably causes local melting of the DNA helix, facilitating insertion of UvrB beta-hairpin between the DNA strands. Then UvrB probes one DNA strand for the presence of a lesion. If a lesion is found the UvrA subunits dissociate and the UvrB-DNA preincision complex is formed. This complex is subsequently bound by UvrC and the second UvrB is released. If no lesion is found, the DNA wraps around the other UvrB subunit that will check the other stand for damage. This Leptospira biflexa serovar Patoc (strain Patoc 1 / Ames) protein is UvrABC system protein B.